Here is a 179-residue protein sequence, read N- to C-terminus: ATP synthase subunit delta (179 aa).

The protein belongs to the ATPase delta chain family. In terms of assembly, F-type ATPases have 2 components, F(1) - the catalytic core - and F(0) - the membrane proton channel. F(1) has five subunits: alpha(3), beta(3), gamma(1), delta(1), epsilon(1). F(0) has three main subunits: a(1), b(2) and c(10-14). The alpha and beta chains form an alternating ring which encloses part of the gamma chain. F(1) is attached to F(0) by a central stalk formed by the gamma and epsilon chains, while a peripheral stalk is formed by the delta and b chains.

It localises to the cell inner membrane. Functionally, f(1)F(0) ATP synthase produces ATP from ADP in the presence of a proton or sodium gradient. F-type ATPases consist of two structural domains, F(1) containing the extramembraneous catalytic core and F(0) containing the membrane proton channel, linked together by a central stalk and a peripheral stalk. During catalysis, ATP synthesis in the catalytic domain of F(1) is coupled via a rotary mechanism of the central stalk subunits to proton translocation. In terms of biological role, this protein is part of the stalk that links CF(0) to CF(1). It either transmits conformational changes from CF(0) to CF(1) or is implicated in proton conduction. The sequence is that of ATP synthase subunit delta from Anaeromyxobacter sp. (strain Fw109-5).